The primary structure comprises 107 residues: Prepilin peptidase-dependent protein C (107 aa).

A propeptide spanning residues 1-10 (MSASLKNQQG) is cleaved from the precursor. Phe-11 is subject to N-methylphenylalanine. The helical transmembrane segment at 11–30 (FSLPEVMLAMVLMVMIVTAL) threads the bilayer.

It localises to the membrane. Not yet known. The polypeptide is Prepilin peptidase-dependent protein C (ppdC) (Escherichia coli (strain K12)).